A 222-amino-acid chain; its full sequence is Deoxyribose-phosphate aldolase (222 aa).

Asp-93 (proton donor/acceptor) is an active-site residue. Residue Lys-156 is the Schiff-base intermediate with acetaldehyde of the active site. Lys-186 functions as the Proton donor/acceptor in the catalytic mechanism.

This sequence belongs to the DeoC/FbaB aldolase family. DeoC type 1 subfamily.

The protein resides in the cytoplasm. The catalysed reaction is 2-deoxy-D-ribose 5-phosphate = D-glyceraldehyde 3-phosphate + acetaldehyde. It functions in the pathway carbohydrate degradation; 2-deoxy-D-ribose 1-phosphate degradation; D-glyceraldehyde 3-phosphate and acetaldehyde from 2-deoxy-alpha-D-ribose 1-phosphate: step 2/2. Its function is as follows. Catalyzes a reversible aldol reaction between acetaldehyde and D-glyceraldehyde 3-phosphate to generate 2-deoxy-D-ribose 5-phosphate. In Corynebacterium glutamicum (strain ATCC 13032 / DSM 20300 / JCM 1318 / BCRC 11384 / CCUG 27702 / LMG 3730 / NBRC 12168 / NCIMB 10025 / NRRL B-2784 / 534), this protein is Deoxyribose-phosphate aldolase.